We begin with the raw amino-acid sequence, 258 residues long: Deoxyribose-phosphate aldolase (258 aa).

Residue Asp102 is the Proton donor/acceptor of the active site. The active-site Schiff-base intermediate with acetaldehyde is Lys165. Lys199 serves as the catalytic Proton donor/acceptor.

The protein belongs to the DeoC/FbaB aldolase family. DeoC type 2 subfamily.

Its subcellular location is the cytoplasm. It carries out the reaction 2-deoxy-D-ribose 5-phosphate = D-glyceraldehyde 3-phosphate + acetaldehyde. The protein operates within carbohydrate degradation; 2-deoxy-D-ribose 1-phosphate degradation; D-glyceraldehyde 3-phosphate and acetaldehyde from 2-deoxy-alpha-D-ribose 1-phosphate: step 2/2. Functionally, catalyzes a reversible aldol reaction between acetaldehyde and D-glyceraldehyde 3-phosphate to generate 2-deoxy-D-ribose 5-phosphate. The chain is Deoxyribose-phosphate aldolase from Aliivibrio salmonicida (strain LFI1238) (Vibrio salmonicida (strain LFI1238)).